The primary structure comprises 505 residues: Lysine--tRNA ligase (505 aa).

2 residues coordinate Mg(2+): Glu415 and Glu422.

Belongs to the class-II aminoacyl-tRNA synthetase family. In terms of assembly, homodimer. Requires Mg(2+) as cofactor.

It is found in the cytoplasm. It carries out the reaction tRNA(Lys) + L-lysine + ATP = L-lysyl-tRNA(Lys) + AMP + diphosphate. This is Lysine--tRNA ligase from Vibrio parahaemolyticus serotype O3:K6 (strain RIMD 2210633).